The sequence spans 153 residues: Adenosine 5'-monophosphoramidase HINT3 (153 aa).

Residues 20–130 (IFCRIANKQE…PASQLGFLSR (111 aa)) enclose the HIT domain. AMP-binding positions include 46 to 47 (DI) and 115 to 117 (HLH). Residues 113–117 (HLHLH) carry the Histidine triad motif motif. Catalysis depends on His-115, which acts as the Tele-AMP-histidine intermediate.

The protein belongs to the HINT family. Forms dimers to octamers and even larger oligomer.

It is found in the cytoplasm. The protein localises to the nucleus. It catalyses the reaction adenosine 5'-phosphoramidate + H2O = AMP + NH4(+). Exhibits adenosine 5'-monophosphoramidase activity, hydrolyzing purine nucleotide phosphoramidates with a single phosphate group such as adenosine 5'monophosphoramidate (AMP-NH2) to yield AMP and NH2. Hydrolyzes lysyl-AMP (AMP-N-epsilon-(N-alpha-acetyl lysine methyl ester)) generated by lysine tRNA ligase. In Xenopus tropicalis (Western clawed frog), this protein is Adenosine 5'-monophosphoramidase HINT3 (hint3).